A 466-amino-acid chain; its full sequence is Chromosomal replication initiator protein DnaA (466 aa).

A domain I, interacts with DnaA modulators region spans residues 1–86; the sequence is MSLSLWQQCL…EVGTKPVTQT (86 aa). The tract at residues 86–129 is domain II; the sequence is TLKTPVHNVVAPTQTTTAQPQRVAPAARSGWDNVPAPAEPTYRS. Residues 130 to 346 are domain III, AAA+ region; the sequence is NVNVKHTFDN…GALNRVIANA (217 aa). Residues glycine 174, glycine 176, lysine 177, and threonine 178 each coordinate ATP. The tract at residues 347–466 is domain IV, binds dsDNA; it reads NFTGRAITID…FSNLIRTLSS (120 aa).

The protein belongs to the DnaA family. In terms of assembly, oligomerizes as a right-handed, spiral filament on DNA at oriC.

The protein resides in the cytoplasm. Its function is as follows. Plays an essential role in the initiation and regulation of chromosomal replication. ATP-DnaA binds to the origin of replication (oriC) to initiate formation of the DNA replication initiation complex once per cell cycle. Binds the DnaA box (a 9 base pair repeat at the origin) and separates the double-stranded (ds)DNA. Forms a right-handed helical filament on oriC DNA; dsDNA binds to the exterior of the filament while single-stranded (ss)DNA is stabiized in the filament's interior. The ATP-DnaA-oriC complex binds and stabilizes one strand of the AT-rich DNA unwinding element (DUE), permitting loading of DNA polymerase. After initiation quickly degrades to an ADP-DnaA complex that is not apt for DNA replication. Binds acidic phospholipids. This Salmonella choleraesuis (strain SC-B67) protein is Chromosomal replication initiator protein DnaA.